The following is a 4545-amino-acid chain: Prolow-density lipoprotein receptor-related protein 1 (4545 aa).

A signal peptide spans 1–19; it reads MLTPPLLLLLPLLSALVSG. Residues 20-4424 are Extracellular-facing; that stretch reads ATMDAPKTCS…SQQQPGHMAS (4405 aa). LDL-receptor class A domains follow at residues 26-67 and 71-111; these read KTCS…ICPQ and QRCP…HCRE. 6 cysteine pairs are disulfide-bonded: Cys-28–Cys-41, Cys-35–Cys-54, Cys-48–Cys-65, Cys-73–Cys-86, Cys-80–Cys-99, and Cys-93–Cys-109. The region spanning 112 to 150 is the EGF-like 1 domain; sequence LRANCSRMGCQHHCVPTPSGPTCYCNSSFQLQADGKTCK. N-linked (GlcNAc...) asparagine glycosylation is present at Asn-115. 6 disulfides stabilise this stretch: Cys-116–Cys-125, Cys-121–Cys-134, Cys-136–Cys-149, Cys-155–Cys-165, Cys-161–Cys-174, and Cys-176–Cys-189. Asn-137 carries N-linked (GlcNAc...) asparagine glycosylation. The EGF-like 2; calcium-binding domain occupies 151-190; it reads DFDECSVYGTCSQLCTNTDGSFTCGCVEGYLLQPDNRSCK. 3 N-linked (GlcNAc...) asparagine glycosylation sites follow: Asn-186, Asn-240, and Asn-275. LDL-receptor class B repeat units follow at residues 293-335, 336-379, and 380-423; these read GNFY…DPAM, GKVF…DLVS, and RLVY…FENY. N-linked (GlcNAc...) asparagine glycosylation is present at Asn-358. N-linked (GlcNAc...) asparagine glycosylation occurs at Asn-447. In terms of domain architecture, EGF-like 3 spans 475-521; that stretch reads RSHACENDQYGKPGGCSDICLLANSHKARTCRCRSGFSLGSDGKSCK. Disulfide bonds link Cys-479/Cys-494, Cys-490/Cys-505, and Cys-507/Cys-520. LDL-receptor class B repeat units lie at residues 572–614, 615–660, 661–711, and 712–755; these read GFIY…DWMG, DNLY…DPLN, GWMY…DIPA, and GRLY…HGNY. A glycan (N-linked (GlcNAc...) asparagine) is linked at Asn-730. An EGF-like 4 domain is found at 804–844; that stretch reads GTNKCRVNNGGCSSLCLATPGSRQCACAEDQVLDTDGVTCL. 33 disulfides stabilise this stretch: Cys-808–Cys-819, Cys-815–Cys-828, Cys-830–Cys-843, Cys-855–Cys-867, Cys-862–Cys-880, Cys-874–Cys-891, Cys-896–Cys-908, Cys-903–Cys-921, Cys-915–Cys-932, Cys-937–Cys-949, Cys-944–Cys-962, Cys-956–Cys-972, Cys-977–Cys-990, Cys-985–Cys-1003, Cys-997–Cys-1012, Cys-1016–Cys-1028, Cys-1023–Cys-1041, Cys-1035–Cys-1052, Cys-1063–Cys-1076, Cys-1070–Cys-1089, Cys-1083–Cys-1098, Cys-1105–Cys-1119, Cys-1113–Cys-1132, Cys-1126–Cys-1141, Cys-1146–Cys-1160, Cys-1153–Cys-1173, Cys-1167–Cys-1183, Cys-1186–Cys-1197, Cys-1193–Cys-1207, Cys-1209–Cys-1222, Cys-1228–Cys-1238, Cys-1234–Cys-1247, and Cys-1249–Cys-1262. 8 consecutive LDL-receptor class A domains span residues 853-893, 894-934, 935-974, 975-1014, 1014-1054, 1061-1100, 1103-1143, and 1144-1183; these read PQCQ…LCHQ, HTCP…TCSA, RTCP…SCAY, PTCF…GCSH, HSCS…NCTN, GGCH…SCEG, HVCD…NCEA, and LACR…GELC. Residues Trp-872, Asp-875, Asp-877, Asp-879, Asp-885, and Glu-886 each contribute to the Ca(2+) site. The N-linked (GlcNAc...) asparagine glycan is linked to Asn-929. Positions 1033, 1036, 1038, 1040, 1046, and 1047 each coordinate Ca(2+). A glycan (N-linked (GlcNAc...) asparagine) is linked at Asn-1051. Trp-1081, Asp-1084, Asp-1086, Asp-1088, Asp-1094, and Glu-1095 together coordinate Ca(2+). 2 N-linked (GlcNAc...) asparagine glycosylation sites follow: Asn-1155 and Asn-1156. 2 EGF-like domains span residues 1184 to 1223 and 1224 to 1263; these read DQCS…HTCQ and IQSY…ESCR. N-linked (GlcNAc...) asparagine glycans are attached at residues Asn-1196 and Asn-1219. 5 LDL-receptor class B repeats span residues 1310 to 1356, 1357 to 1399, 1400 to 1446, 1447 to 1491, and 1492 to 1532; these read SALY…DWIA, GNIY…DPRD, GILF…DYLE, KRIL…YGGE, and VYWT…YHPS. N-linked (GlcNAc...) asparagine glycosylation is present at Asn-1512. One can recognise an EGF-like 7 domain in the interval 1537–1580; the sequence is APNPCEANGGRGPCSHLCLINYNRTVSCACPHLMKLHKDNTTCY. 3 disulfides stabilise this stretch: Cys-1541-Cys-1554, Cys-1550-Cys-1564, and Cys-1566-Cys-1579. N-linked (GlcNAc...) asparagine glycosylation is found at Asn-1559, Asn-1576, Asn-1617, and Asn-1646. 4 LDL-receptor class B repeats span residues 1628–1670, 1671–1714, 1715–1754, and 1755–1799; these read QRVY…DWVS, RNLF…HPLR, GKLY…DFPE, and SKLY…MGDK. 4 N-linked (GlcNAc...) asparagine glycosylation sites follow: Asn-1724, Asn-1734, Asn-1764, and Asn-1826. In terms of domain architecture, EGF-like 8 spans 1847 to 1888; that stretch reads GTNPCSVNNGDCSQLCLPTSETTRSCMCTAGYSLRSGQQACE. Disulfide bonds link Cys-1851/Cys-1862, Cys-1858/Cys-1872, and Cys-1874/Cys-1887. N-linked (GlcNAc...) asparagine glycosylation is present at Asn-1934. LDL-receptor class B repeat units lie at residues 1935–1977, 1978–2020, 2021–2064, and 2065–2108; these read DTIY…DWIA, GNIY…HPEK, GYLF…DYQG, and GKLY…FEDF. The N-linked (GlcNAc...) asparagine glycan is linked to Asn-1996. At Lys-2010 the chain carries N6-acetyllysine. The N-linked (GlcNAc...) asparagine glycan is linked to Asn-2049. 2 N-linked (GlcNAc...) asparagine glycosylation sites follow: Asn-2118 and Asn-2128. One can recognise an EGF-like 9 domain in the interval 2156–2196; that stretch reads GTNVCAVANGGCQQLCLYRGGGQRACACAHGMLAEDGASCR. Cystine bridges form between Cys-2160-Cys-2171, Cys-2167-Cys-2181, and Cys-2183-Cys-2195. 5 LDL-receptor class B repeats span residues 2254–2295, 2296–2344, 2345–2389, 2390–2432, and 2433–2474; these read NRIF…HRGW, DTLY…DECQ, NLMF…DHRA, EKLY…YGEH, and IFWT…VAND. An N-linked (GlcNAc...) asparagine glycan is attached at Asn-2473. The EGF-like 10 domain maps to 2479-2519; sequence ELSPCRINNGGCQDLCLLTHQGHVNCSCRGGRILQEDFTCR. 3 disulfides stabilise this stretch: Cys-2483–Cys-2494, Cys-2490–Cys-2504, and Cys-2506–Cys-2518. N-linked (GlcNAc...) asparagine glycosylation occurs at Asn-2503. Asn-2522 carries an N-linked (GlcNAc...) asparagine glycan. LDL-receptor class A domains follow at residues 2523–2564, 2565–2603, 2604–2642, 2643–2691, 2695–2733, 2733–2772, and 2773–2815; these read SSCR…YCNS, RRCK…PCNK, TACG…NCSA, TDCS…DCPG, PRCP…HCNK, KFCS…HCEG, and KTCG…GCLY. Intrachain disulfides connect Cys-2525–Cys-2538, Cys-2533–Cys-2551, Cys-2545–Cys-2562, Cys-2567–Cys-2579, Cys-2574–Cys-2592, and Cys-2586–Cys-2601. An N-linked (GlcNAc...) asparagine glycan is attached at Asn-2602. 15 disulfides stabilise this stretch: Cys-2606-Cys-2618, Cys-2613-Cys-2631, Cys-2625-Cys-2640, Cys-2645-Cys-2667, Cys-2661-Cys-2680, Cys-2674-Cys-2689, Cys-2697-Cys-2709, Cys-2704-Cys-2722, Cys-2716-Cys-2731, Cys-2735-Cys-2747, Cys-2742-Cys-2760, Cys-2754-Cys-2770, Cys-2775-Cys-2788, Cys-2782-Cys-2801, and Cys-2795-Cys-2813. Asn-2621 and Asn-2639 each carry an N-linked (GlcNAc...) asparagine glycan. Asn-2816 carries an N-linked (GlcNAc...) asparagine glycan. 3 consecutive LDL-receptor class A domains span residues 2817–2856, 2857–2900, and 2903–2941; these read STCD…ECEY, PTCG…HCTS, and HKCN…RGCH. Disulfide bonds link Cys-2819-Cys-2831, Cys-2826-Cys-2844, Cys-2838-Cys-2854, Cys-2859-Cys-2871, Cys-2866-Cys-2885, Cys-2879-Cys-2898, Cys-2905-Cys-2918, Cys-2913-Cys-2931, Cys-2925-Cys-2940, Cys-2945-Cys-2957, Cys-2953-Cys-2966, Cys-2968-Cys-2981, Cys-2987-Cys-2997, Cys-2993-Cys-3006, and Cys-3008-Cys-3022. N-linked (GlcNAc...) asparagine glycosylation occurs at Asn-2906. The 41-residue stretch at 2942–2982 folds into the EGF-like 11 domain; the sequence is VNECLSRKLSGCSQDCEDLKIGFKCRCRPGFRLKDDGRTCA. Positions 2983–3023 constitute an EGF-like 12; calcium-binding domain; it reads DLDECSTTFPCSQLCINTHGSYKCLCVEGYAPRGGDPHSCK. Residues Asn-3049 and Asn-3090 are each glycosylated (N-linked (GlcNAc...) asparagine). LDL-receptor class B repeat units lie at residues 3070–3114, 3115–3157, 3158–3201, 3202–3244, and 3245–3285; these read QMIY…DWVG, GNLY…DVQN, GYLY…DYVT, ERIY…FEDY, and VYWT…FHAL. Asn-3265 carries N-linked (GlcNAc...) asparagine glycosylation. The region spanning 3291–3332 is the EGF-like 13 domain; the sequence is PNHPCKVNNGGCSNLCLLSPGGGHKCACPTNFYLGGDGRTCV. 3 disulfide bridges follow: Cys-3295–Cys-3306, Cys-3302–Cys-3316, and Cys-3318–Cys-3331. 11 consecutive LDL-receptor class A domains span residues 3333-3372, 3373-3411, 3412-3451, 3452-3492, 3493-3534, 3535-3573, 3574-3612, 3612-3650, 3653-3693, 3694-3734, and 3740-3779; these read SNCT…DCPE, FKCR…NCDI, HVCL…DCPE, VTCA…NCTQ, MTCG…ECDE, RTCE…SCTP, RPCS…DCTP, PRCD…ACGT, RTCP…ECAR, FICP…DCEP, and PHCK…DCSI. Asn-3334 carries N-linked (GlcNAc...) asparagine glycosylation. Intrachain disulfides connect Cys-3335-Cys-3347, Cys-3342-Cys-3360, Cys-3354-Cys-3370, Cys-3375-Cys-3387, Cys-3382-Cys-3400, Cys-3394-Cys-3409, Cys-3414-Cys-3427, Cys-3421-Cys-3440, Cys-3434-Cys-3449, Cys-3454-Cys-3467, Cys-3461-Cys-3480, Cys-3474-Cys-3490, Cys-3495-Cys-3508, Cys-3502-Cys-3521, Cys-3515-Cys-3532, Cys-3537-Cys-3549, Cys-3544-Cys-3562, Cys-3556-Cys-3571, Cys-3576-Cys-3588, Cys-3583-Cys-3601, Cys-3595-Cys-3610, Cys-3614-Cys-3626, Cys-3621-Cys-3639, Cys-3633-Cys-3648, Cys-3655-Cys-3667, Cys-3662-Cys-3680, Cys-3674-Cys-3691, Cys-3696-Cys-3710, Cys-3704-Cys-3723, Cys-3717-Cys-3732, Cys-3742-Cys-3755, Cys-3750-Cys-3768, Cys-3762-Cys-3777, Cys-3786-Cys-3799, Cys-3793-Cys-3808, Cys-3810-Cys-3823, Cys-3829-Cys-3839, Cys-3835-Cys-3848, and Cys-3850-Cys-3861. Asn-3489 is a glycosylation site (N-linked (GlcNAc...) asparagine). The N-linked (GlcNAc...) asparagine glycan is linked to Asn-3663. 2 consecutive EGF-like domains span residues 3782 to 3824 and 3825 to 3862; these read KLTS…PGCQ and DINE…NTCK. N-linked (GlcNAc...) asparagine glycosylation occurs at Asn-3789. Asn-3840 carries N-linked (GlcNAc...) asparagine glycosylation. LDL-receptor class B repeat units lie at residues 3913 to 3955, 3971 to 4013, 4014 to 4057, and 4058 to 4102; these read GRVY…HLNI, GNVY…DPLR, GTMY…DYHN, and ERLY…FEDY. The Recognition site for proteolytical processing signature appears at 3941 to 3944; that stretch reads RHRR. Residue Asn-3954 is glycosylated (N-linked (GlcNAc...) asparagine). N-linked (GlcNAc...) asparagine glycans are attached at residues Asn-4076 and Asn-4126. 7 EGF-like domains span residues 4148-4184, 4197-4233, 4233-4269, 4269-4305, 4305-4341, 4341-4376, and 4374-4410; these read VTNP…GTCV, RPGT…DKCE, ELDQ…PKCT, TAQV…DRCQ, QYRQ…PRCE, EVNK…PSCL, and SCLT…PRCE. Cystine bridges form between Cys-4152-Cys-4161, Cys-4157-Cys-4170, Cys-4172-Cys-4183, Cys-4201-Cys-4211, Cys-4205-Cys-4221, Cys-4223-Cys-4232, Cys-4237-Cys-4247, Cys-4241-Cys-4257, Cys-4259-Cys-4268, Cys-4273-Cys-4283, Cys-4277-Cys-4293, Cys-4295-Cys-4304, Cys-4309-Cys-4319, Cys-4313-Cys-4329, Cys-4331-Cys-4340, Cys-4345-Cys-4353, and Cys-4348-Cys-4364. Asn-4180 carries an N-linked (GlcNAc...) asparagine glycan. Residues Asn-4279 and Asn-4280 are each glycosylated (N-linked (GlcNAc...) asparagine). An N-linked (GlcNAc...) asparagine glycan is attached at Asn-4365. 4 disulfides stabilise this stretch: Cys-4366/Cys-4375, Cys-4378/Cys-4388, Cys-4382/Cys-4398, and Cys-4400/Cys-4409. A helical transmembrane segment spans residues 4425-4445; the sequence is ILIPLLLLLLLLLVAGVVFWY. Over 4446-4545 the chain is Cytoplasmic; it reads KRRVRGAKGF…PEDEIGDPLA (100 aa). Residues 4446–4545 form an interaction with MAFB region; it reads KRRVRGAKGF…PEDEIGDPLA (100 aa). Thr-4461 bears the Phosphothreonine mark. The short motif at 4503 to 4508 is the NPXY motif element; that stretch reads FTNPVY. At Tyr-4508 the chain carries Phosphotyrosine. Ser-4518, Ser-4521, and Ser-4524 each carry phosphoserine.

It belongs to the LDLR family. As to quaternary structure, heterodimer of an 85-kDa membrane-bound carboxyl subunit and a non-covalently attached 515-kDa N-terminal subunit. Intracellular domain interacts with MAFB. Found in a complex with PID1/PCLI1, LRP1 and CUBNI. Interacts with SNX17, PID1/PCLI1, PDGF and CUBN. The intracellular domain interacts with SHC1, GULP1 and DAB1. Can weakly interact (via NPXY motif) with DAB2 (via PID domain); the interaction is enhanced by tyrosine phosphorylation of the NPXY motif. Interacts with MDK; promotes neuronal survival. Interacts with LRPAP1; this interaction is followed by rapid internalization. Interacts with uPA/PLAU and PAI1/SERPINE1, either individually or in complex with each other, leading to rapid endocytosis; this interaction is abolished in the presence of LRPAP1/RAP. Also interacts with tPA/PLAT alone or in complex with SERPINE1. Interacts with the urokinase receptor PLAUR; this interaction leads to PLAUR internalization and is impaired in the presence of SORL1. Interacts with PDGFB. Interacts with TAU/MAPT, leading to endocytosis; this interaction is reduced in the presence of LRPAP1/RAP. Interacts with IGFBP3. Interacts with ADGRG6. In terms of processing, phosphorylated on serine and threonine residues. Post-translationally, phosphorylated on tyrosine residues upon stimulation with PDGF. Tyrosine phosphorylation promotes interaction with SHC1. Cleaved into a 85 kDa membrane-spanning subunit (LRP-85) and a 515 kDa large extracellular domain (LRP-515) that remains non-covalently associated. Gamma-secretase-dependent cleavage of LRP-85 releases the intracellular domain from the membrane.

The protein localises to the cell membrane. Its subcellular location is the membrane. It is found in the coated pit. It localises to the golgi outpost. The protein resides in the cytoplasm. The protein localises to the cytoskeleton. Its subcellular location is the microtubule organizing center. It is found in the nucleus. In terms of biological role, endocytic receptor involved in endocytosis and in phagocytosis of apoptotic cells. Required for early embryonic development. Involved in cellular lipid homeostasis. Involved in the plasma clearance of chylomicron remnants and activated LRPAP1 (alpha 2-macroglobulin), as well as the local metabolism of complexes between plasminogen activators and their endogenous inhibitors. Acts as an alpha-2-macroglobulin receptor. Acts as a TAU/MAPT receptor and controls the endocytosis of TAU/MAPT as well as its subsequent spread. May modulate cellular events, such as APP metabolism, kinase-dependent intracellular signaling, neuronal calcium signaling as well as neurotransmission. Also acts as a receptor for IGFBP3 to mediate cell growth inhibition. Functionally, (Microbial infection) Functions as a receptor for Vibrio cholerae cholix toxin and for Pseudomonas aeruginosa exotoxin A. The polypeptide is Prolow-density lipoprotein receptor-related protein 1 (Mus musculus (Mouse)).